A 320-amino-acid polypeptide reads, in one-letter code: Malate dehydrogenase (320 aa).

NAD(+) contacts are provided by residues 10–15 (GAGQIG) and Asp34. 2 residues coordinate substrate: Arg83 and Arg89. Residues Asn96 and 119 to 121 (ITN) contribute to the NAD(+) site. Residues Asn121 and Arg152 each contribute to the substrate site. The Proton acceptor role is filled by His176.

It belongs to the LDH/MDH superfamily. MDH type 3 family.

The catalysed reaction is (S)-malate + NAD(+) = oxaloacetate + NADH + H(+). Catalyzes the reversible oxidation of malate to oxaloacetate. The sequence is that of Malate dehydrogenase from Beijerinckia indica subsp. indica (strain ATCC 9039 / DSM 1715 / NCIMB 8712).